Reading from the N-terminus, the 96-residue chain is Cystatin (96 aa).

One can recognise a Cystatin domain in the interval 22 to 65 (DFIKAALNETGTHAGRKYKVLRSSQQVVAGMKYTFYIVFEDDES). Residue asparagine 29 is glycosylated (N-linked (GlcNAc...) asparagine).

Belongs to the cystatin family. As to quaternary structure, interacts with cathepsin L-like peptidase; the interaction results in inhibition of cathepsin L-like peptidase activity. In terms of tissue distribution, salivary gland. Midgut.

Its function is as follows. Cysteine proteinase inhibitor. Inhibits cathepsin L-like peptidase. Increases cell viability following apoptosis induction by staurosporine. Inhibits human cathepsin S (CTSS), human cathepsin L2 (CTSV), human cathepsin L (CTSL), human cathepsin B (CTSB) and papain. (Microbial infection) Modulates dengue virus type 2 replication in salivary glands. The sequence is that of Cystatin from Aedes aegypti (Yellowfever mosquito).